The chain runs to 305 residues: 17-beta-hydroxysteroid dehydrogenase type 3 (305 aa).

Position 44 to 73 (44 to 73 (GQWAVITGAGDGIGKAYSFELARHGLNVVL)) interacts with NADP(+). Substrate is bound at residue serine 181. The active-site Proton acceptor is the tyrosine 194.

This sequence belongs to the short-chain dehydrogenases/reductases (SDR) family. 17-beta-HSD 3 subfamily. As to expression, expressed in the testes.

Its subcellular location is the endoplasmic reticulum. The catalysed reaction is a 17beta-hydroxy steroid + NADP(+) = a 17-oxo steroid + NADPH + H(+). It catalyses the reaction testosterone + NADP(+) = androst-4-ene-3,17-dione + NADPH + H(+). The enzyme catalyses 17beta-estradiol + NADP(+) = estrone + NADPH + H(+). It carries out the reaction 3beta-hydroxyandrost-5-en-17-one + NADPH + H(+) = androst-5-en-3beta,17beta-diol + NADP(+). The catalysed reaction is 17beta-hydroxy-5alpha-androstan-3-one + NADP(+) = 5alpha-androstan-3,17-dione + NADPH + H(+). It catalyses the reaction androsterone + NADPH + H(+) = 5alpha-androstane-3alpha,17beta-diol + NADP(+). The enzyme catalyses 3beta-hydroxy-5alpha-androstan-17-one + NADPH + H(+) = 5alpha-androstane-3beta,17beta-diol + NADP(+). It carries out the reaction androst-4-ene-3,11,17-trione + NADPH + H(+) = 17beta-hydroxyandrost-4-ene-3,11-dione + NADP(+). The catalysed reaction is 11beta-hydroxyandrost-4-ene-3,17-dione + NADPH + H(+) = 11beta,17beta-dihydroxyandrost-4-ene-3-one + NADP(+). Its pathway is hormone biosynthesis; testosterone biosynthesis. It functions in the pathway steroid metabolism. In terms of biological role, catalyzes the conversion of 17-oxosteroids to 17beta-hydroxysteroids. Favors the reduction of androstenedione to testosterone. Testosterone is the key androgen driving male development and function. Uses NADPH while the two other EDH17B enzymes use NADH. Androgens such as epiandrosterone, dehydroepiandrosterone, androsterone and androstanedione are accepted as substrates and reduced at C-17. Can reduce 11-ketoandrostenedione as well as 11beta-hydroxyandrostenedione at C-17 to the respective testosterone forms. Plays a role in the rate-limiting-step for the maximum level of testosterone production by the testis but does not affect basal testosterone production. This is 17-beta-hydroxysteroid dehydrogenase type 3 from Mus musculus (Mouse).